A 379-amino-acid chain; its full sequence is Cytochrome b (379 aa).

Helical transmembrane passes span 33–53, 77–98, 113–133, and 178–198; these read FGSL…FLAM, WTIR…FIHV, WNVG…GYVL, and FFAL…IHLL. Heme b contacts are provided by His-83 and His-97. Residues His-182 and His-196 each coordinate heme b. His-201 contributes to the a ubiquinone binding site. Helical transmembrane passes span 226–246, 288–308, 320–340, and 347–367; these read TKDF…TLFY, LGGV…PLLQ, LSQF…WIGG, and FITI…LIMP.

Belongs to the cytochrome b family. As to quaternary structure, the cytochrome bc1 complex contains 11 subunits: 3 respiratory subunits (MT-CYB, CYC1 and UQCRFS1), 2 core proteins (UQCRC1 and UQCRC2) and 6 low-molecular weight proteins (UQCRH/QCR6, UQCRB/QCR7, UQCRQ/QCR8, UQCR10/QCR9, UQCR11/QCR10 and a cleavage product of UQCRFS1). This cytochrome bc1 complex then forms a dimer. It depends on heme b as a cofactor.

Its subcellular location is the mitochondrion inner membrane. In terms of biological role, component of the ubiquinol-cytochrome c reductase complex (complex III or cytochrome b-c1 complex) that is part of the mitochondrial respiratory chain. The b-c1 complex mediates electron transfer from ubiquinol to cytochrome c. Contributes to the generation of a proton gradient across the mitochondrial membrane that is then used for ATP synthesis. In Lepilemur edwardsi (Milne-Edwards's sportive lemur), this protein is Cytochrome b (MT-CYB).